The chain runs to 181 residues: Inner membrane-spanning protein YciB (181 aa).

5 consecutive transmembrane segments (helical) span residues 10-30, 50-70, 72-92, 118-138, and 148-168; these read LVIF…GALI, MHLI…VFHD, AFIK…LGIS, ITWY…YVAF, and FKVF…VFYL.

This sequence belongs to the YciB family.

It is found in the cell inner membrane. Plays a role in cell envelope biogenesis, maintenance of cell envelope integrity and membrane homeostasis. In Shewanella putrefaciens (strain CN-32 / ATCC BAA-453), this protein is Inner membrane-spanning protein YciB.